We begin with the raw amino-acid sequence, 375 residues long: DNA replication and repair protein RecF (375 aa).

30-37 lines the ATP pocket; the sequence is GLNGQGKT.

The protein belongs to the RecF family.

It is found in the cytoplasm. Its function is as follows. The RecF protein is involved in DNA metabolism; it is required for DNA replication and normal SOS inducibility. RecF binds preferentially to single-stranded, linear DNA. It also seems to bind ATP. This chain is DNA replication and repair protein RecF, found in Halothermothrix orenii (strain H 168 / OCM 544 / DSM 9562).